A 357-amino-acid polypeptide reads, in one-letter code: Chorismate synthase (357 aa).

Position 46 (arginine 46) interacts with NADP(+). FMN is bound by residues 123 to 125 (RSS), 235 to 236 (NA), glycine 275, 290 to 294 (KPTPS), and arginine 316.

Belongs to the chorismate synthase family. Homotetramer. Requires FMNH2 as cofactor.

It catalyses the reaction 5-O-(1-carboxyvinyl)-3-phosphoshikimate = chorismate + phosphate. It participates in metabolic intermediate biosynthesis; chorismate biosynthesis; chorismate from D-erythrose 4-phosphate and phosphoenolpyruvate: step 7/7. Its function is as follows. Catalyzes the anti-1,4-elimination of the C-3 phosphate and the C-6 proR hydrogen from 5-enolpyruvylshikimate-3-phosphate (EPSP) to yield chorismate, which is the branch point compound that serves as the starting substrate for the three terminal pathways of aromatic amino acid biosynthesis. This reaction introduces a second double bond into the aromatic ring system. This chain is Chorismate synthase, found in Nitratiruptor sp. (strain SB155-2).